A 257-amino-acid polypeptide reads, in one-letter code: Pimeloyl-[acyl-carrier protein] methyl ester esterase (257 aa).

The AB hydrolase-1 domain maps to 16–240; it reads LVLIHGWGMN…EQASHAPFIS (225 aa). Substrate contacts are provided by residues tryptophan 22, 82-83, and 143-147; these read SL and FMALQ. The active-site Nucleophile is serine 82. Residues aspartate 207 and histidine 235 contribute to the active site. Residue histidine 235 coordinates substrate.

Belongs to the AB hydrolase superfamily. Carboxylesterase BioH family. In terms of assembly, monomer.

The protein resides in the cytoplasm. It carries out the reaction 6-carboxyhexanoyl-[ACP] methyl ester + H2O = 6-carboxyhexanoyl-[ACP] + methanol + H(+). The protein operates within cofactor biosynthesis; biotin biosynthesis. In terms of biological role, the physiological role of BioH is to remove the methyl group introduced by BioC when the pimeloyl moiety is complete. It allows to synthesize pimeloyl-ACP via the fatty acid synthetic pathway through the hydrolysis of the ester bonds of pimeloyl-ACP esters. The sequence is that of Pimeloyl-[acyl-carrier protein] methyl ester esterase from Aliivibrio fischeri (strain MJ11) (Vibrio fischeri).